A 640-amino-acid polypeptide reads, in one-letter code: Threonine--tRNA ligase (640 aa).

One can recognise a TGS domain in the interval 1 to 61; the sequence is MPTITLPDGS…THDATLQIIT (61 aa). Residues 242–533 form a catalytic region; that stretch reads DHRKIGKQLD…LIEHYAGVFP (292 aa). Cys333, His384, and His510 together coordinate Zn(2+).

This sequence belongs to the class-II aminoacyl-tRNA synthetase family. As to quaternary structure, homodimer. Zn(2+) is required as a cofactor.

The protein localises to the cytoplasm. The catalysed reaction is tRNA(Thr) + L-threonine + ATP = L-threonyl-tRNA(Thr) + AMP + diphosphate + H(+). Functionally, catalyzes the attachment of threonine to tRNA(Thr) in a two-step reaction: L-threonine is first activated by ATP to form Thr-AMP and then transferred to the acceptor end of tRNA(Thr). Also edits incorrectly charged L-seryl-tRNA(Thr). The chain is Threonine--tRNA ligase from Pseudomonas putida (strain W619).